A 543-amino-acid polypeptide reads, in one-letter code: Chaperonin GroEL 1 (543 aa).

ATP is bound by residues 29–32, 86–90, Gly-413, 479–481, and Asp-495; these read TLGP, DGTTT, and NAA. The disordered stretch occupies residues 524–543; it reads PEPKDAAPAGVGGGGGDFDY. Gly residues predominate over residues 533–543; it reads GVGGGGGDFDY.

It belongs to the chaperonin (HSP60) family. In terms of assembly, forms a cylinder of 14 subunits composed of two heptameric rings stacked back-to-back. Interacts with the co-chaperonin GroES.

The protein resides in the cytoplasm. It carries out the reaction ATP + H2O + a folded polypeptide = ADP + phosphate + an unfolded polypeptide.. Its function is as follows. Together with its co-chaperonin GroES, plays an essential role in assisting protein folding. The GroEL-GroES system forms a nano-cage that allows encapsulation of the non-native substrate proteins and provides a physical environment optimized to promote and accelerate protein folding. The protein is Chaperonin GroEL 1 of Anabaena sp. (strain L31).